Reading from the N-terminus, the 194-residue chain is Methyl-CpG-binding domain protein 3-like 1 (194 aa).

The interval 1–104 is transcription repressor; the sequence is MAKSSQRKQR…KLVPSYTGGS (104 aa).

It belongs to the MBD3L family. As to expression, highly expressed in testis. Detected at low levels in pancreas. Not detected in the other tissues tested.

It is found in the nucleus. Its function is as follows. Transcriptional repressor. The sequence is that of Methyl-CpG-binding domain protein 3-like 1 (MBD3L1) from Homo sapiens (Human).